Consider the following 181-residue polypeptide: Probable calcium-binding protein CML16 (181 aa).

The tract at residues 1–24 (MSNTTEKKMPQQQQVERPTALAPA) is disordered. 4 consecutive EF-hand domains span residues 23 to 58 (PADAEIERVFTRFDADGDGRISPSELAAVTRAIAPP), 63 to 98 (AGGREVAAMMNELDTDRDGFVDLGEFAAFHGRGRGD), 100 to 135 (EHEAELRAAFDVYDVDGDGRITAAELGKVLGRIGEG), and 136 to 171 (CSAEECERMIASVDVDGDGCVGFEEFKKMMCRDAAA). 19 residues coordinate Ca(2+): aspartate 36, aspartate 38, aspartate 40, arginine 42, glutamate 47, aspartate 76, aspartate 78, aspartate 80, glutamate 87, aspartate 113, aspartate 115, aspartate 117, arginine 119, glutamate 124, aspartate 149, aspartate 151, aspartate 153, cysteine 155, and glutamate 160.

Potential calcium sensor. This chain is Probable calcium-binding protein CML16 (CML16), found in Oryza sativa subsp. japonica (Rice).